We begin with the raw amino-acid sequence, 257 residues long: Anamorsin homolog (257 aa).

Positions 1–132 are N-terminal SAM-like domain; it reads MSVLALDVAR…ARGTAFALKS (132 aa). Positions 133-171 are linker; sequence RAVRVNATAADAADAWGASAAADDDELIDESALLTELDV. [2Fe-2S] cluster contacts are provided by Cys-181, Cys-190, Cys-193, and Cys-195. Positions 181-195 are fe-S binding site A; the sequence is CDVGAGKKACKNCTC. The [4Fe-4S] cluster site is built by Cys-219, Cys-222, Cys-230, and Cys-233. Short sequence motifs (cx2C motif) lie at residues 219 to 222 and 230 to 233; these read CGNC and CAGC. The segment at 219–233 is fe-S binding site B; sequence CGNCALGDAFRCAGC.

The protein belongs to the anamorsin family. As to quaternary structure, monomer. [2Fe-2S] cluster serves as cofactor. The cofactor is [4Fe-4S] cluster.

It is found in the cytoplasm. It localises to the mitochondrion intermembrane space. Its function is as follows. Component of the cytosolic iron-sulfur (Fe-S) protein assembly (CIA) machinery. Required for the maturation of extramitochondrial Fe-S proteins. Part of an electron transfer chain functioning in an early step of cytosolic Fe-S biogenesis, facilitating the de novo assembly of a [4Fe-4S] cluster on the cytosolic Fe-S scaffold complex. Electrons are transferred from NADPH via a FAD- and FMN-containing diflavin oxidoreductase. Together with the diflavin oxidoreductase, also required for the assembly of the diferric tyrosyl radical cofactor of ribonucleotide reductase (RNR), probably by providing electrons for reduction during radical cofactor maturation in the catalytic small subunit. In Ostreococcus lucimarinus (strain CCE9901), this protein is Anamorsin homolog.